The following is a 309-amino-acid chain: Gamma-hemolysin component A (309 aa).

Residues 1 to 29 (MIKNKILTATLAVGLIAPLANPFIEISKA) form the signal peptide.

The protein belongs to the aerolysin family. In terms of assembly, toxicity requires sequential binding and synergistic association of a class S and a class F component which form heterooligomeric complexes. HlgA (class S) associates with HlgB (class F) thus forming an AB toxin in strains producing both gamma-hemolysins and leukocidins. HlgA and LukF-PV can also form a complex.

The protein resides in the secreted. Toxin that seems to act by forming pores in the membrane of the cell. Has a hemolytic and a leucotoxic activity. The protein is Gamma-hemolysin component A (hlgA) of Staphylococcus aureus (strain MRSA252).